The chain runs to 282 residues: sn-glycerol-3-phosphate transport system permease protein UgpE (282 aa).

Transmembrane regions (helical) follow at residues 14–34 (LILI…FVAS), 86–106 (MAIA…IVFF), 112–132 (MFFF…RILP), 146–168 (YAGL…QFFL), 201–221 (IAAL…WPLL), and 248–268 (WNYV…VVVL). The region spanning 78–269 (LWNSFVVAMA…IPPILVVVLM (192 aa)) is the ABC transmembrane type-1 domain.

The protein belongs to the binding-protein-dependent transport system permease family. The complex is composed of two ATP-binding proteins (UgpC), two transmembrane proteins (UgpA and UgpE) and a solute-binding protein (UgpB).

It localises to the cell inner membrane. Its function is as follows. Part of the ABC transporter complex UgpBAEC involved in sn-glycerol-3-phosphate (G3P) import. Probably responsible for the translocation of the substrate across the membrane. The protein is sn-glycerol-3-phosphate transport system permease protein UgpE (ugpE) of Brucella suis biovar 1 (strain 1330).